The following is a 138-amino-acid chain: Sporulation-specific cell division protein SsgB (138 aa).

This sequence belongs to the SsgA family. In terms of assembly, monomer. Interacts with SsgA. Interacts with FtsZ (via N-terminus).

The protein resides in the cell septum. Its function is as follows. Involved in sporulation-specific cell division. Required for early stages of sporulation. Important in the process of growth cessation prior to sporulation-specific cell division. Recruits cell division protein FtsZ to the future septum sites and tethers the contractile ring structure (Z ring) to the cytoplasmic membrane during sporulation. Stimulates polymerization and filament length of FtsZ in vitro. The protein is Sporulation-specific cell division protein SsgB of Thermobifida fusca (strain YX).